The following is a 1601-amino-acid chain: Polycomb group protein Psc (1601 aa).

Disordered stretches follow at residues Met1–Thr91 and Asn165–Thr245. Composition is skewed to low complexity over residues Ala8 to Thr91 and Ser182 to Ser198. The span at Trp199–Gly215 shows a compositional bias: polar residues. Residues Thr228–Thr245 show a composition bias toward low complexity. An RING-type zinc finger spans residues Cys263–Glu302. 7 disordered regions span residues Lys561–Asp693, Val711–Pro856, Ile895–Tyr960, Tyr1011–Gln1097, Ser1116–Lys1315, Asn1330–Met1408, and Ala1512–Lys1601. Over residues Ser567–Pro590 the composition is skewed to low complexity. A compositionally biased stretch (basic and acidic residues) spans Asp611 to Ser637. Residues Pro638–Ser649 show a composition bias toward low complexity. Ser656 and Ser658 each carry phosphoserine. The span at Ser676–Ala689 shows a compositional bias: polar residues. Over residues Ser729–Lys739 the composition is skewed to low complexity. The span at Leu812 to Leu822 shows a compositional bias: pro residues. Polar residues predominate over residues Thr929–Val938. Residues Tyr1011–Gly1022 show a composition bias toward low complexity. Residues Leu1036–Gly1045 show a composition bias toward gly residues. Residues Ser1069–Ile1085 show a composition bias toward low complexity. A compositionally biased stretch (polar residues) spans Ser1116–Gln1133. Ser1139 carries the phosphoserine modification. The span at Pro1204–Ser1217 shows a compositional bias: pro residues. A phosphothreonine mark is found at Thr1222, Thr1236, and Thr1251. A compositionally biased stretch (basic and acidic residues) spans Val1247–Thr1258. Phosphoserine occurs at positions 1253, 1266, and 1274. Over residues Gln1261–Asn1272 the composition is skewed to polar residues. Composition is skewed to polar residues over residues Gln1352–Ala1375 and Ala1561–Ala1587.

As to quaternary structure, component of PRC1 complex, which contains many PcG proteins like Pc, ph, Scm, Psc, Sce and also chromatin-remodeling proteins such as histone deacetylases. This complex is distinct from the Esc/E(z) complex, at least composed of esc, E(z), Su(z)12, HDAC1/Rpd3 and Caf1-55. The 2 complexes however cooperate and interact together during the first 3 hours of development to establish PcG silencing.

The protein localises to the nucleus. Polycomb group (PcG) protein. PcG proteins act by forming multiprotein complexes, which are required to maintain the transcriptionally repressive state of homeotic genes throughout development. PcG proteins are not required to initiate repression, but to maintain it during later stages of development. Component of the PcG multiprotein PRC1 complex, a complex that acts via chromatin remodeling and modification of histones; it mediates monoubiquitination of histone H2A 'Lys-118', rendering chromatin heritably changed in its expressibility. Needed to maintain expression patterns of the homeotic selector genes of the Antennapedia (Antp-C) and Bithorax (BX-C) complexes, and hence for the maintenance of segmental determination. This Drosophila melanogaster (Fruit fly) protein is Polycomb group protein Psc (Psc).